We begin with the raw amino-acid sequence, 436 residues long: 3-ketoacyl-CoA thiolase (436 aa).

Cysteine 99 functions as the Acyl-thioester intermediate in the catalytic mechanism. Active-site proton acceptor residues include histidine 392 and cysteine 422.

Belongs to the thiolase-like superfamily. Thiolase family. Heterotetramer of two alpha chains (FadJ) and two beta chains (FadI).

Its subcellular location is the cytoplasm. It carries out the reaction an acyl-CoA + acetyl-CoA = a 3-oxoacyl-CoA + CoA. The protein operates within lipid metabolism; fatty acid beta-oxidation. Catalyzes the final step of fatty acid oxidation in which acetyl-CoA is released and the CoA ester of a fatty acid two carbons shorter is formed. The chain is 3-ketoacyl-CoA thiolase from Shewanella amazonensis (strain ATCC BAA-1098 / SB2B).